We begin with the raw amino-acid sequence, 66 residues long: DNA gyrase inhibitor YacG (66 aa).

Cys-9, Cys-12, Cys-28, and Cys-32 together coordinate Zn(2+). The disordered stretch occupies residues 45–66; the sequence is HKIAGSEESEDELYSGDLEPRH.

This sequence belongs to the DNA gyrase inhibitor YacG family. In terms of assembly, interacts with GyrB. It depends on Zn(2+) as a cofactor.

In terms of biological role, inhibits all the catalytic activities of DNA gyrase by preventing its interaction with DNA. Acts by binding directly to the C-terminal domain of GyrB, which probably disrupts DNA binding by the gyrase. This is DNA gyrase inhibitor YacG from Pseudomonas putida (strain ATCC 47054 / DSM 6125 / CFBP 8728 / NCIMB 11950 / KT2440).